Reading from the N-terminus, the 320-residue chain is o-succinylbenzoate synthase (320 aa).

The Proton donor role is filled by K133. The Mg(2+) site is built by D161, E190, and D213. K235 (proton acceptor) is an active-site residue.

This sequence belongs to the mandelate racemase/muconate lactonizing enzyme family. MenC type 1 subfamily. A divalent metal cation serves as cofactor.

It catalyses the reaction (1R,6R)-6-hydroxy-2-succinyl-cyclohexa-2,4-diene-1-carboxylate = 2-succinylbenzoate + H2O. Its pathway is quinol/quinone metabolism; 1,4-dihydroxy-2-naphthoate biosynthesis; 1,4-dihydroxy-2-naphthoate from chorismate: step 4/7. The protein operates within quinol/quinone metabolism; menaquinone biosynthesis. In terms of biological role, converts 2-succinyl-6-hydroxy-2,4-cyclohexadiene-1-carboxylate (SHCHC) to 2-succinylbenzoate (OSB). The polypeptide is o-succinylbenzoate synthase (Escherichia coli O81 (strain ED1a)).